The primary structure comprises 280 residues: Ribosomal RNA small subunit methyltransferase A (280 aa).

The S-adenosyl-L-methionine site is built by leucine 24, glycine 49, glutamate 70, aspartate 95, and asparagine 118.

This sequence belongs to the class I-like SAM-binding methyltransferase superfamily. rRNA adenine N(6)-methyltransferase family. RsmA subfamily.

It is found in the cytoplasm. The catalysed reaction is adenosine(1518)/adenosine(1519) in 16S rRNA + 4 S-adenosyl-L-methionine = N(6)-dimethyladenosine(1518)/N(6)-dimethyladenosine(1519) in 16S rRNA + 4 S-adenosyl-L-homocysteine + 4 H(+). In terms of biological role, specifically dimethylates two adjacent adenosines (A1518 and A1519) in the loop of a conserved hairpin near the 3'-end of 16S rRNA in the 30S particle. May play a critical role in biogenesis of 30S subunits. This is Ribosomal RNA small subunit methyltransferase A from Syntrophus aciditrophicus (strain SB).